The chain runs to 72 residues: uncharacterized protein (72 aa).

The signal sequence occupies residues 1 to 22 (MQSNFIFATLLVLLSLLTFTYA). At 23–28 (SGSSSM) the chain is on the extracellular side. Residues 29 to 49 (TSSSMPMFGGAIVAAFAFAIF) form a helical membrane-spanning segment. Over 50–72 (SRLAQNFAPRAIFSLLPYHSVSC) the chain is Cytoplasmic.

Its subcellular location is the membrane. This is an uncharacterized protein from Dictyostelium discoideum (Social amoeba).